Here is a 122-residue protein sequence, read N- to C-terminus: Large ribosomal subunit protein uL14 (122 aa).

Belongs to the universal ribosomal protein uL14 family. In terms of assembly, part of the 50S ribosomal subunit. Forms a cluster with proteins L3 and L19. In the 70S ribosome, L14 and L19 interact and together make contacts with the 16S rRNA in bridges B5 and B8.

Binds to 23S rRNA. Forms part of two intersubunit bridges in the 70S ribosome. This Lachnospira eligens (strain ATCC 27750 / DSM 3376 / VPI C15-48 / C15-B4) (Eubacterium eligens) protein is Large ribosomal subunit protein uL14.